The sequence spans 967 residues: Leucine--tRNA ligase (967 aa).

The short motif at 43-53 (PYLSGHLHVGH) is the 'HIGH' region element. The 'KMSKS' region signature appears at 650–654 (KMSKS). Residue lysine 653 participates in ATP binding.

This sequence belongs to the class-I aminoacyl-tRNA synthetase family.

The protein resides in the cytoplasm. It carries out the reaction tRNA(Leu) + L-leucine + ATP = L-leucyl-tRNA(Leu) + AMP + diphosphate. The sequence is that of Leucine--tRNA ligase from Pyrococcus horikoshii (strain ATCC 700860 / DSM 12428 / JCM 9974 / NBRC 100139 / OT-3).